The chain runs to 446 residues: Methionine aminopeptidase 2-3 (446 aa).

Residues 14–116 are disordered; it reads ITDAGANGAD…ENRYRTTSEE (103 aa). The span at 61–76 shows a compositional bias: basic residues; the sequence is AKKKKNKKRKPKKKQP. A compositionally biased stretch (polar residues) spans 86-96; it reads PLSQLFPNNSY. The segment covering 98 to 116 has biased composition (basic and acidic residues); sequence KGEEVEYKDENRYRTTSEE. Residue His-199 participates in substrate binding. A divalent metal cation contacts are provided by Asp-219, Asp-230, and His-299. A substrate-binding site is contributed by His-307. Positions 332 and 427 each coordinate a divalent metal cation.

This sequence belongs to the peptidase M24A family. Methionine aminopeptidase eukaryotic type 2 subfamily. Co(2+) is required as a cofactor. The cofactor is Zn(2+). Mn(2+) serves as cofactor. Requires Fe(2+) as cofactor.

It localises to the cytoplasm. The enzyme catalyses Release of N-terminal amino acids, preferentially methionine, from peptides and arylamides.. Its function is as follows. Cotranslationally removes the N-terminal methionine from nascent proteins. The N-terminal methionine is often cleaved when the second residue in the primary sequence is small and uncharged (Met-Ala-, Cys, Gly, Pro, Ser, Thr, or Val). This chain is Methionine aminopeptidase 2-3, found in Aspergillus fumigatus (strain CBS 144.89 / FGSC A1163 / CEA10) (Neosartorya fumigata).